The primary structure comprises 474 residues: uncharacterized protein (474 aa).

Positions Met-1–Leu-14 are enriched in polar residues. The segment at Met-1–Ser-137 is disordered. Phosphoserine is present on Ser-45. Polar residues-rich tracts occupy residues Arg-73–Ser-83, Ser-97–Pro-113, and Ser-125–Ser-137. The residue at position 169 (Ser-169) is a Phosphoserine. Transmembrane regions (helical) follow at residues Val-210 to Gly-230 and Ile-236 to Ile-256.

The protein localises to the membrane. This is an uncharacterized protein from Arabidopsis thaliana (Mouse-ear cress).